Consider the following 245-residue polypeptide: Acetoacetate decarboxylase (245 aa).

K116 serves as the catalytic Schiff-base intermediate with acetoacetate.

It belongs to the ADC family.

The enzyme catalyses acetoacetate + H(+) = acetone + CO2. In terms of biological role, catalyzes the conversion of acetoacetate to acetone and carbon dioxide. This Acidiphilium cryptum (strain JF-5) protein is Acetoacetate decarboxylase.